A 414-amino-acid chain; its full sequence is 5-aminolevulinate synthase (414 aa).

Residues arginine 22, serine 133, and lysine 152 each contribute to the substrate site. 3 residues coordinate pyridoxal 5'-phosphate: serine 185, histidine 213, and threonine 241. Lysine 244 is a catalytic residue. Lysine 244 is subject to N6-(pyridoxal phosphate)lysine. Pyridoxal 5'-phosphate is bound by residues threonine 273 and threonine 274. Threonine 359 contacts substrate.

Belongs to the class-II pyridoxal-phosphate-dependent aminotransferase family. As to quaternary structure, homodimer. Requires pyridoxal 5'-phosphate as cofactor.

The catalysed reaction is succinyl-CoA + glycine + H(+) = 5-aminolevulinate + CO2 + CoA. Its pathway is porphyrin-containing compound metabolism; protoporphyrin-IX biosynthesis; 5-aminolevulinate from glycine: step 1/1. The polypeptide is 5-aminolevulinate synthase (hemA) (Rickettsia prowazekii (strain Madrid E)).